We begin with the raw amino-acid sequence, 931 residues long: Isoleucine--tRNA ligase (931 aa).

The 'HIGH' region motif lies at Pro-57 to His-67. Residue Glu-556 coordinates L-isoleucyl-5'-AMP. The 'KMSKS' region motif lies at Lys-597–Ser-601. Residue Lys-600 coordinates ATP. The Zn(2+) site is built by Cys-890, Cys-893, Cys-910, and Cys-913.

This sequence belongs to the class-I aminoacyl-tRNA synthetase family. IleS type 1 subfamily. As to quaternary structure, monomer. Requires Zn(2+) as cofactor.

It localises to the cytoplasm. The catalysed reaction is tRNA(Ile) + L-isoleucine + ATP = L-isoleucyl-tRNA(Ile) + AMP + diphosphate. Its function is as follows. Catalyzes the attachment of isoleucine to tRNA(Ile). As IleRS can inadvertently accommodate and process structurally similar amino acids such as valine, to avoid such errors it has two additional distinct tRNA(Ile)-dependent editing activities. One activity is designated as 'pretransfer' editing and involves the hydrolysis of activated Val-AMP. The other activity is designated 'posttransfer' editing and involves deacylation of mischarged Val-tRNA(Ile). This chain is Isoleucine--tRNA ligase, found in Lactobacillus delbrueckii subsp. bulgaricus (strain ATCC 11842 / DSM 20081 / BCRC 10696 / JCM 1002 / NBRC 13953 / NCIMB 11778 / NCTC 12712 / WDCM 00102 / Lb 14).